The primary structure comprises 492 residues: Cysteine--tRNA ligase (492 aa).

A Zn(2+)-binding site is contributed by cysteine 35. The 'HIGH' region signature appears at 37-47 (PTVYSNVHLGN). Residues cysteine 230, histidine 255, and glutamate 259 each coordinate Zn(2+). Residues 287–291 (KMAKS) carry the 'KMSKS' region motif. Position 290 (lysine 290) interacts with ATP.

Belongs to the class-I aminoacyl-tRNA synthetase family. Monomer. The cofactor is Zn(2+).

The protein resides in the cytoplasm. The enzyme catalyses tRNA(Cys) + L-cysteine + ATP = L-cysteinyl-tRNA(Cys) + AMP + diphosphate. The chain is Cysteine--tRNA ligase from Flavobacterium johnsoniae (strain ATCC 17061 / DSM 2064 / JCM 8514 / BCRC 14874 / CCUG 350202 / NBRC 14942 / NCIMB 11054 / UW101) (Cytophaga johnsonae).